Consider the following 288-residue polypeptide: Ribosomal RNA small subunit methyltransferase A (288 aa).

Positions 18, 20, 45, 66, 91, and 118 each coordinate S-adenosyl-L-methionine.

The protein belongs to the class I-like SAM-binding methyltransferase superfamily. rRNA adenine N(6)-methyltransferase family. RsmA subfamily.

It localises to the cytoplasm. It catalyses the reaction adenosine(1518)/adenosine(1519) in 16S rRNA + 4 S-adenosyl-L-methionine = N(6)-dimethyladenosine(1518)/N(6)-dimethyladenosine(1519) in 16S rRNA + 4 S-adenosyl-L-homocysteine + 4 H(+). Functionally, specifically dimethylates two adjacent adenosines (A1518 and A1519) in the loop of a conserved hairpin near the 3'-end of 16S rRNA in the 30S particle. May play a critical role in biogenesis of 30S subunits. This chain is Ribosomal RNA small subunit methyltransferase A, found in Mannheimia succiniciproducens (strain KCTC 0769BP / MBEL55E).